Consider the following 61-residue polypeptide: Sperm protamine P1 (61 aa).

The segment at 1–61 (MARYRHSRSR…RRYSRRRRRY (61 aa)) is disordered.

It belongs to the protamine P1 family. Testis.

It is found in the nucleus. Its subcellular location is the chromosome. Functionally, protamines substitute for histones in the chromatin of sperm during the haploid phase of spermatogenesis. They compact sperm DNA into a highly condensed, stable and inactive complex. The sequence is that of Sperm protamine P1 (PRM1) from Macropus giganteus (Eastern gray kangaroo).